A 406-amino-acid polypeptide reads, in one-letter code: Tubby-like F-box protein 11 (406 aa).

One can recognise an F-box domain in the interval 53-108 (SCWTQLPPELLREVLARVEESEGWWPRRRDVVACAGVCRSWRGIVREIVRTPEASG).

It belongs to the TUB family. Ubiquitous.

In Oryza sativa subsp. japonica (Rice), this protein is Tubby-like F-box protein 11 (TULP11).